We begin with the raw amino-acid sequence, 188 residues long: Peroxidase B (188 aa).

The protein belongs to the peroxidase family. Post-translationally, partially N-glycosylated.

Its subcellular location is the secreted. The catalysed reaction is 2 a phenolic donor + H2O2 = 2 a phenolic radical donor + 2 H2O. The sequence is that of Peroxidase B from Aloe vera (Aloe).